Here is a 461-residue protein sequence, read N- to C-terminus: Ribulose bisphosphate carboxylase (461 aa).

N112 contacts substrate. The active-site Proton acceptor is the K167. Position 169 (K169) interacts with substrate. Residues K192, D194, and E195 each coordinate Mg(2+). An N6-carboxylysine modification is found at K192. H288 acts as the Proton acceptor in catalysis. Residues R289, H322, and S369 each coordinate substrate.

The protein belongs to the RuBisCO large chain family. Type II subfamily. Homodimer. Mg(2+) serves as cofactor.

It catalyses the reaction 2 (2R)-3-phosphoglycerate + 2 H(+) = D-ribulose 1,5-bisphosphate + CO2 + H2O. The catalysed reaction is D-ribulose 1,5-bisphosphate + O2 = 2-phosphoglycolate + (2R)-3-phosphoglycerate + 2 H(+). RuBisCO catalyzes two reactions: the carboxylation of D-ribulose 1,5-bisphosphate, the primary event in carbon dioxide fixation, as well as the oxidative fragmentation of the pentose substrate. Both reactions occur simultaneously and in competition at the same active site. The sequence is that of Ribulose bisphosphate carboxylase from Rhodopseudomonas palustris (strain BisB5).